We begin with the raw amino-acid sequence, 321 residues long: MNKEKTIIFSMPNTHVLAQEICDELKMKLHSVNKTIFADGEVLLSSKETVRSKDVFIVASTSHPANNNIMDLLIFVDSLKRASAKTINVILSYYGYARQDRKAEGRQPIAAKLLADLLQVAGISRIVVVDLHNPSIQGFFNIPVDDIKAQYILSKEFTIKDEKFTIVSPDHGGTIRARIMAEIISNDVKIAIIDKRRVSTNKTEVLGVIGDINNENAVIVDDIIDTGGTIVNAAEVLKKNGAKKISIVASHGIFSKGFDIFEDADVIDEVIVTNSIDNYELAKKYKKLKIVSLAPFLSKVIRSIMDSKSVSDIYAKYLESK.

ATP contacts are provided by residues 39–41 and 98–99; these read DGE and RQ. Mg(2+) contacts are provided by histidine 132 and aspartate 170. Lysine 195 is a catalytic residue. Residues arginine 197, aspartate 221, and 225 to 229 contribute to the D-ribose 5-phosphate site; that span reads DTGGT.

It belongs to the ribose-phosphate pyrophosphokinase family. Class I subfamily. As to quaternary structure, homohexamer. It depends on Mg(2+) as a cofactor.

It localises to the cytoplasm. The catalysed reaction is D-ribose 5-phosphate + ATP = 5-phospho-alpha-D-ribose 1-diphosphate + AMP + H(+). It participates in metabolic intermediate biosynthesis; 5-phospho-alpha-D-ribose 1-diphosphate biosynthesis; 5-phospho-alpha-D-ribose 1-diphosphate from D-ribose 5-phosphate (route I): step 1/1. Involved in the biosynthesis of the central metabolite phospho-alpha-D-ribosyl-1-pyrophosphate (PRPP) via the transfer of pyrophosphoryl group from ATP to 1-hydroxyl of ribose-5-phosphate (Rib-5-P). This Mycoplasmopsis pulmonis (strain UAB CTIP) (Mycoplasma pulmonis) protein is Ribose-phosphate pyrophosphokinase.